The sequence spans 196 residues: uncharacterized protein (196 aa).

Residues Met-1 to Ala-27 form the signal peptide.

Its subcellular location is the secreted. This is an uncharacterized protein from Arthroderma benhamiae (strain ATCC MYA-4681 / CBS 112371) (Trichophyton mentagrophytes).